Reading from the N-terminus, the 286-residue chain is ATP synthase gamma chain (286 aa).

Belongs to the ATPase gamma chain family. As to quaternary structure, F-type ATPases have 2 components, CF(1) - the catalytic core - and CF(0) - the membrane proton channel. CF(1) has five subunits: alpha(3), beta(3), gamma(1), delta(1), epsilon(1). CF(0) has three main subunits: a, b and c.

The protein resides in the cell inner membrane. Produces ATP from ADP in the presence of a proton gradient across the membrane. The gamma chain is believed to be important in regulating ATPase activity and the flow of protons through the CF(0) complex. The chain is ATP synthase gamma chain from Shewanella oneidensis (strain ATCC 700550 / JCM 31522 / CIP 106686 / LMG 19005 / NCIMB 14063 / MR-1).